Consider the following 214-residue polypeptide: Pyrrolidone-carboxylate peptidase (214 aa).

Active-site residues include glutamate 80, cysteine 143, and histidine 166.

It belongs to the peptidase C15 family. As to quaternary structure, homotetramer.

The protein resides in the cytoplasm. The enzyme catalyses Release of an N-terminal pyroglutamyl group from a polypeptide, the second amino acid generally not being Pro.. In terms of biological role, removes 5-oxoproline from various penultimate amino acid residues except L-proline. This is Pyrrolidone-carboxylate peptidase from Enterobacter sp. (strain 638).